Consider the following 204-residue polypeptide: uncharacterized protein (204 aa).

An N-terminal signal peptide occupies residues 1-16 (MKYTFLAVLSAVTVLA).

The protein resides in the secreted. This is an uncharacterized protein from Arthroderma benhamiae (strain ATCC MYA-4681 / CBS 112371) (Trichophyton mentagrophytes).